A 264-amino-acid polypeptide reads, in one-letter code: uncharacterized protein (264 aa).

A helical transmembrane segment spans residues 7–27 (LTLGICLVLLIILIVGYVIMT).

It belongs to the staphylococcal tandem lipoprotein family.

It is found in the cell membrane. This is an uncharacterized protein from Staphylococcus aureus (strain NCTC 8325 / PS 47).